Reading from the N-terminus, the 377-residue chain is Chaperone MoxR1 (377 aa).

Residues 1 to 33 form a disordered region; the sequence is MTSAGGFPAGAGGYQTPGGHSASPAHEAPPGGA. Residues 7 to 16 are compositionally biased toward gly residues; that stretch reads FPAGAGGYQT. Residues 19–33 show a composition bias toward low complexity; the sequence is GHSASPAHEAPPGGA. An ATP-binding site is contributed by 78 to 85; it reads GVPGVAKT.

This sequence belongs to the MoxR family. Interacts with RipA. Interacts with host Toll-like receptor 4 (TLR4).

Displays ATP-enhanced chaperone activity. Required for the proper folding of the peptidoglycan endopeptidase RipA and its secretion through the TAT secretion system. In vitro, prevents thermal aggregation of MalZ protein and protects the functional activity of the restriction enzyme NdeI from thermal inactivation. In terms of biological role, could be a moonlighting protein that uses a multipronged approach to dampen host-directed immunity for efficient replication, survival and pathogenesis. Can enhance virulence by inhibiting autophagy and apoptosis, and disrupting cellular bioenergetics. Binds and activates host TLR4 on the surface of macrophage cells, leading to the activation of the host NFKB and MAPK signaling cascades and enhanced secretion of proinflammatory cytokines. Inhibits autophagic flux via activation of PI3K-AKT-MTOR-ULK1 signaling cascade and represses apoptosis via inhibiting protooncogene c-FOS and MAPK JNK1/2. Also induces robust disruption of cellular bioenergetics by metabolic reprogramming to rewire the citric acid cycle intermediates for its benefit. In Mycobacterium tuberculosis (strain ATCC 25618 / H37Rv), this protein is Chaperone MoxR1.